A 442-amino-acid polypeptide reads, in one-letter code: tRNA modification GTPase MnmE (442 aa).

Residues Arg-22, Glu-79, and Lys-119 each contribute to the (6S)-5-formyl-5,6,7,8-tetrahydrofolate site. The region spanning 216–366 is the TrmE-type G domain; it reads GIKTCLVGAP…LLEKIKSIFA (151 aa). Asn-226 serves as a coordination point for K(+). GTP-binding positions include 226–231, 245–251, and 270–273; these read NSGKSS, SEIPGTT, and DTAG. Ser-230 provides a ligand contact to Mg(2+). Positions 245, 247, and 250 each coordinate K(+). Thr-251 is a Mg(2+) binding site. Lys-442 is a (6S)-5-formyl-5,6,7,8-tetrahydrofolate binding site.

Belongs to the TRAFAC class TrmE-Era-EngA-EngB-Septin-like GTPase superfamily. TrmE GTPase family. As to quaternary structure, homodimer. Heterotetramer of two MnmE and two MnmG subunits. It depends on K(+) as a cofactor.

It is found in the cytoplasm. Its function is as follows. Exhibits a very high intrinsic GTPase hydrolysis rate. Involved in the addition of a carboxymethylaminomethyl (cmnm) group at the wobble position (U34) of certain tRNAs, forming tRNA-cmnm(5)s(2)U34. In Mesomycoplasma hyopneumoniae (strain J / ATCC 25934 / NCTC 10110) (Mycoplasma hyopneumoniae), this protein is tRNA modification GTPase MnmE.